Here is a 136-residue protein sequence, read N- to C-terminus: Small ribosomal subunit protein eS8 (136 aa).

Positions 1-23 (MGVYHGNDLKKPTGGKKRPHQKV) are disordered. The segment covering 13-23 (TGGKKRPHQKV) has biased composition (basic residues).

This sequence belongs to the eukaryotic ribosomal protein eS8 family. In terms of assembly, part of the 30S ribosomal subunit.

In Hyperthermus butylicus (strain DSM 5456 / JCM 9403 / PLM1-5), this protein is Small ribosomal subunit protein eS8.